The sequence spans 432 residues: Glutamate-1-semialdehyde 2,1-aminomutase 1 (432 aa).

At Lys272 the chain carries N6-(pyridoxal phosphate)lysine.

It belongs to the class-III pyridoxal-phosphate-dependent aminotransferase family. HemL subfamily. Homodimer. It depends on pyridoxal 5'-phosphate as a cofactor.

Its subcellular location is the cytoplasm. It carries out the reaction (S)-4-amino-5-oxopentanoate = 5-aminolevulinate. It participates in porphyrin-containing compound metabolism; protoporphyrin-IX biosynthesis; 5-aminolevulinate from L-glutamyl-tRNA(Glu): step 2/2. This is Glutamate-1-semialdehyde 2,1-aminomutase 1 from Exiguobacterium sibiricum (strain DSM 17290 / CCUG 55495 / CIP 109462 / JCM 13490 / 255-15).